Consider the following 395-residue polypeptide: Elongation factor Tu (395 aa).

Residues 10–204 (KPHVNIGTIG…AVDSYIPTPE (195 aa)) form the tr-type G domain. Positions 19 to 26 (GHVDHGKT) are G1. A GTP-binding site is contributed by 19–26 (GHVDHGKT). Thr-26 serves as a coordination point for Mg(2+). The interval 60 to 64 (GITIS) is G2. Residues 81-84 (DCPG) form a G3 region. GTP contacts are provided by residues 81 to 85 (DCPGH) and 136 to 139 (NKCD). The segment at 136–139 (NKCD) is G4. The interval 174–176 (SAL) is G5.

This sequence belongs to the TRAFAC class translation factor GTPase superfamily. Classic translation factor GTPase family. EF-Tu/EF-1A subfamily. As to quaternary structure, monomer. In terms of processing, phosphorylated on serine and/or threonine residue(s). Dephosphorylated by stp.

The protein localises to the cytoplasm. The enzyme catalyses GTP + H2O = GDP + phosphate + H(+). GTP hydrolase that promotes the GTP-dependent binding of aminoacyl-tRNA to the A-site of ribosomes during protein biosynthesis. The polypeptide is Elongation factor Tu (Listeria innocua serovar 6a (strain ATCC BAA-680 / CLIP 11262)).